The primary structure comprises 502 residues: Cobyric acid synthase (502 aa).

The GATase cobBQ-type domain maps to 260-433; that stretch reads VLRVAVCAVP…WHGSLESDGF (174 aa). C341 serves as the catalytic Nucleophile. H425 is a catalytic residue.

The protein belongs to the CobB/CobQ family. CobQ subfamily.

Its pathway is cofactor biosynthesis; adenosylcobalamin biosynthesis. Functionally, catalyzes amidations at positions B, D, E, and G on adenosylcobyrinic A,C-diamide. NH(2) groups are provided by glutamine, and one molecule of ATP is hydrogenolyzed for each amidation. This Streptomyces coelicolor (strain ATCC BAA-471 / A3(2) / M145) protein is Cobyric acid synthase.